Here is a 306-residue protein sequence, read N- to C-terminus: Replication termination factor 2 (306 aa).

The interval 193-276 (AKLEKKTKKP…RSIADSEESE (84 aa)) is disordered. The segment covering 226-240 (GKPEEASLDSREKKT) has biased composition (basic and acidic residues). Positions 243 to 255 (APKSTAMNESSSG) are enriched in polar residues. At Ser-287 the chain carries Phosphoserine.

It belongs to the rtf2 family. Interacts with DDI2; probably also interacts with DDI1. Undergoes proteasomal degradation, via DDI1 and DDI2. Removal from stalled replisomes and degradation are required for genome stability.

It localises to the chromosome. Functionally, replication termination factor which is a component of the elongating replisome. Required for ATR pathway signaling upon DNA damage and has a positive activity during DNA replication. Might function to facilitate fork pausing at replication fork barriers like the rDNA. May be globally required to stimulate ATR signaling after the fork stalls or encounters a lesion. Interacts with nascent DNA. In Homo sapiens (Human), this protein is Replication termination factor 2.